Reading from the N-terminus, the 125-residue chain is Small ribosomal subunit protein uS12 (125 aa).

The residue at position 89 (aspartate 89) is a 3-methylthioaspartic acid. The segment at 100-125 (GSLDTQGVKDRKQSRSKYGAKRPKAA) is disordered. Residues 113-125 (SRSKYGAKRPKAA) are compositionally biased toward basic residues.

Belongs to the universal ribosomal protein uS12 family. In terms of assembly, part of the 30S ribosomal subunit. Contacts proteins S8 and S17. May interact with IF1 in the 30S initiation complex.

In terms of biological role, with S4 and S5 plays an important role in translational accuracy. Interacts with and stabilizes bases of the 16S rRNA that are involved in tRNA selection in the A site and with the mRNA backbone. Located at the interface of the 30S and 50S subunits, it traverses the body of the 30S subunit contacting proteins on the other side and probably holding the rRNA structure together. The combined cluster of proteins S8, S12 and S17 appears to hold together the shoulder and platform of the 30S subunit. This chain is Small ribosomal subunit protein uS12, found in Dechloromonas aromatica (strain RCB).